Consider the following 306-residue polypeptide: Glutaminase (306 aa).

The substrate site is built by S64, N115, E159, N166, Y190, Y242, and V260.

This sequence belongs to the glutaminase family. Homotetramer.

It carries out the reaction L-glutamine + H2O = L-glutamate + NH4(+). This is Glutaminase from Vibrio atlanticus (strain LGP32) (Vibrio splendidus (strain Mel32)).